The sequence spans 362 residues: Chorismate synthase (362 aa).

NADP(+)-binding residues include R48 and R54. FMN is bound by residues 125 to 127 (RSS), 238 to 239 (NA), G278, 293 to 297 (KPTSS), and R319.

The protein belongs to the chorismate synthase family. As to quaternary structure, homotetramer. The cofactor is FMNH2.

It catalyses the reaction 5-O-(1-carboxyvinyl)-3-phosphoshikimate = chorismate + phosphate. It participates in metabolic intermediate biosynthesis; chorismate biosynthesis; chorismate from D-erythrose 4-phosphate and phosphoenolpyruvate: step 7/7. In terms of biological role, catalyzes the anti-1,4-elimination of the C-3 phosphate and the C-6 proR hydrogen from 5-enolpyruvylshikimate-3-phosphate (EPSP) to yield chorismate, which is the branch point compound that serves as the starting substrate for the three terminal pathways of aromatic amino acid biosynthesis. This reaction introduces a second double bond into the aromatic ring system. The sequence is that of Chorismate synthase from Psychromonas ingrahamii (strain DSM 17664 / CCUG 51855 / 37).